Consider the following 333-residue polypeptide: Geranylgeranyl pyrophosphate synthase olcC (333 aa).

Positions 61, 64, and 93 each coordinate isopentenyl diphosphate. Mg(2+)-binding residues include D100 and D104. Position 109 (R109) interacts with dimethylallyl diphosphate. Position 110 (R110) interacts with isopentenyl diphosphate. Dimethylallyl diphosphate contacts are provided by K187, T188, and Q221. D224 is a binding site for Mg(2+). Positions 228, 238, and 248 each coordinate dimethylallyl diphosphate.

This sequence belongs to the FPP/GGPP synthase family. Requires Mg(2+) as cofactor.

It carries out the reaction isopentenyl diphosphate + dimethylallyl diphosphate = (2E)-geranyl diphosphate + diphosphate. The catalysed reaction is isopentenyl diphosphate + (2E)-geranyl diphosphate = (2E,6E)-farnesyl diphosphate + diphosphate. The enzyme catalyses isopentenyl diphosphate + (2E,6E)-farnesyl diphosphate = (2E,6E,10E)-geranylgeranyl diphosphate + diphosphate. The protein operates within secondary metabolite biosynthesis; terpenoid biosynthesis. Geranylgeranyl pyrophosphate synthase; part of the gene cluster that mediates the biosynthesis of 15-deoxyoxalicine B. The first step of the pathway is the synthesis of nicotinyl-CoA from nicotinic acid by the nicotinic acid-CoA ligase olcI. Nicotinyl-CoA is then a substrate of polyketide synthase olcA to produce 4-hydroxy-6-(3-pyridinyl)-2H-pyran-2-one (HPPO) which is further prenylated by the polyprenyl transferase olcH to yield geranylgeranyl-HPPO. Geranylgeranyl pyrophosphate is provided by the cluster-specific geranylgeranyl pyrophosphate synthase olcC. The FAD-dependent monooxygenase olcE catalyzes the epoxidation of geranylgeranyl-HPPO and the terpene cyclase olcD catalyzes the cyclization of the terpenoid component, resulting in the formation of the tricyclic terpene moiety seen in predecaturin E. The cytochrome P450 monooxygenase then catalyzes the allylic oxidation of predecaturin E, which is followed by spirocylization with concomitant loss of one molecule of water to form decaturin E. Decaturin E is the substrate of the cytochrome P450 monooxygenase olcJ which hydroxylates it at the C-29 position to form decaturin F. The short-chain dehydrogenase/reductase olcF may catalyze the oxidation of decaturin F to generate the 29-hydroxyl-27-one intermediate, and subsequent hemiacetal formation probably leads to the formation of decaturin C. The dioxygenase olcK may be a peroxisomal enzyme that catalyzes the hydroxylation of decaturin C into decaturin A once decaturin C is shuttled into the peroxisome by the MFS transporter olcL. Finally the cytochrome P450 monooxygenase olcB catalyzes the oxidative rearrangement to yield 15-deoxyoxalicine B. In the absence of olcJ, decaturin E may be shunted to a pathway in which it is oxidized to a ketone, possibly by olcF, to form decaturin D, which undergoes further allylic oxidation to yield decaturin G. Moreover, in the absence of oclK or oclL, oclB can convert decaturin C into 15-deoxyoxalicine A. This chain is Geranylgeranyl pyrophosphate synthase olcC, found in Penicillium canescens.